The chain runs to 433 residues: 3-phosphoshikimate 1-carboxyvinyltransferase (433 aa).

Residues Lys-22, Ser-23, and Arg-27 each coordinate 3-phosphoshikimate. Lys-22 serves as a coordination point for phosphoenolpyruvate. Phosphoenolpyruvate contacts are provided by Gly-94 and Arg-122. Residues Ser-168, Ser-169, Gln-170, Ser-196, Asp-319, and Lys-346 each coordinate 3-phosphoshikimate. Position 170 (Gln-170) interacts with phosphoenolpyruvate. Asp-319 (proton acceptor) is an active-site residue. Arg-350, Arg-394, and Lys-418 together coordinate phosphoenolpyruvate.

Belongs to the EPSP synthase family. As to quaternary structure, monomer.

It localises to the cytoplasm. The catalysed reaction is 3-phosphoshikimate + phosphoenolpyruvate = 5-O-(1-carboxyvinyl)-3-phosphoshikimate + phosphate. It functions in the pathway metabolic intermediate biosynthesis; chorismate biosynthesis; chorismate from D-erythrose 4-phosphate and phosphoenolpyruvate: step 6/7. Its function is as follows. Catalyzes the transfer of the enolpyruvyl moiety of phosphoenolpyruvate (PEP) to the 5-hydroxyl of shikimate-3-phosphate (S3P) to produce enolpyruvyl shikimate-3-phosphate and inorganic phosphate. The polypeptide is 3-phosphoshikimate 1-carboxyvinyltransferase (Nitrosomonas eutropha (strain DSM 101675 / C91 / Nm57)).